The primary structure comprises 328 residues: tRNA uridine(34) hydroxylase (328 aa).

In terms of domain architecture, Rhodanese spans 130-224 (LDEDTVVLDT…YGKDPEVQGE (95 aa)). The active-site Cysteine persulfide intermediate is cysteine 184.

It belongs to the TrhO family.

The catalysed reaction is uridine(34) in tRNA + AH2 + O2 = 5-hydroxyuridine(34) in tRNA + A + H2O. Its function is as follows. Catalyzes oxygen-dependent 5-hydroxyuridine (ho5U) modification at position 34 in tRNAs. This Streptococcus pyogenes serotype M28 (strain MGAS6180) protein is tRNA uridine(34) hydroxylase.